The chain runs to 207 residues: Outer-membrane lipoprotein LolB (207 aa).

The first 21 residues, 1–21 (MPQPDFRLIRLLPLAALVLTA), serve as a signal peptide directing secretion. C22 carries N-palmitoyl cysteine lipidation. C22 carries the S-diacylglycerol cysteine lipid modification.

This sequence belongs to the LolB family. As to quaternary structure, monomer.

The protein resides in the cell outer membrane. Its function is as follows. Plays a critical role in the incorporation of lipoproteins in the outer membrane after they are released by the LolA protein. This Shigella sonnei (strain Ss046) protein is Outer-membrane lipoprotein LolB.